The primary structure comprises 436 residues: Ribulose bisphosphate carboxylase large chain (436 aa).

Positions 104 and 154 each coordinate substrate. Lysine 156 functions as the Proton acceptor in the catalytic mechanism. Position 158 (lysine 158) interacts with substrate. Positions 182, 184, and 185 each coordinate Mg(2+). Residue lysine 182 is modified to N6-carboxylysine. Residue histidine 275 is the Proton acceptor of the active site. The substrate site is built by arginine 276, histidine 308, and serine 360.

It belongs to the RuBisCO large chain family. Type I subfamily. Heterohexadecamer of 8 large chains and 8 small chains. Mg(2+) serves as cofactor.

It localises to the plastid. The protein localises to the chloroplast. The catalysed reaction is 2 (2R)-3-phosphoglycerate + 2 H(+) = D-ribulose 1,5-bisphosphate + CO2 + H2O. It carries out the reaction D-ribulose 1,5-bisphosphate + O2 = 2-phosphoglycolate + (2R)-3-phosphoglycerate + 2 H(+). Functionally, ruBisCO catalyzes two reactions: the carboxylation of D-ribulose 1,5-bisphosphate, the primary event in carbon dioxide fixation, as well as the oxidative fragmentation of the pentose substrate in the photorespiration process. Both reactions occur simultaneously and in competition at the same active site. The protein is Ribulose bisphosphate carboxylase large chain of Euglena stellata.